Here is a 204-residue protein sequence, read N- to C-terminus: Large ribosomal subunit protein eL15 (204 aa).

The protein belongs to the eukaryotic ribosomal protein eL15 family. In terms of assembly, component of the large ribosomal subunit.

The protein resides in the cytoplasm. Component of the large ribosomal subunit. The ribosome is a large ribonucleoprotein complex responsible for the synthesis of proteins in the cell. The protein is Large ribosomal subunit protein eL15 (rpl15) of Paramisgurnus dabryanus.